The primary structure comprises 221 residues: Enolase-phosphatase E1 (221 aa).

The Mg(2+) site is built by aspartate 9 and glutamate 11. Substrate contacts are provided by residues 116 to 117 (SS) and lysine 152. Aspartate 180 contributes to the Mg(2+) binding site.

The protein belongs to the HAD-like hydrolase superfamily. MasA/MtnC family. As to quaternary structure, monomer. Mg(2+) is required as a cofactor.

The protein localises to the cytoplasm. It is found in the nucleus. The catalysed reaction is 5-methylsulfanyl-2,3-dioxopentyl phosphate + H2O = 1,2-dihydroxy-5-(methylsulfanyl)pent-1-en-3-one + phosphate. Its pathway is amino-acid biosynthesis; L-methionine biosynthesis via salvage pathway; L-methionine from S-methyl-5-thio-alpha-D-ribose 1-phosphate: step 3/6. It functions in the pathway amino-acid biosynthesis; L-methionine biosynthesis via salvage pathway; L-methionine from S-methyl-5-thio-alpha-D-ribose 1-phosphate: step 4/6. Bifunctional enzyme that catalyzes the enolization of 2,3-diketo-5-methylthiopentyl-1-phosphate (DK-MTP-1-P) into the intermediate 2-hydroxy-3-keto-5-methylthiopentenyl-1-phosphate (HK-MTPenyl-1-P), which is then dephosphorylated to form the acireductone 1,2-dihydroxy-3-keto-5-methylthiopentene (DHK-MTPene). This chain is Enolase-phosphatase E1, found in Kluyveromyces lactis (strain ATCC 8585 / CBS 2359 / DSM 70799 / NBRC 1267 / NRRL Y-1140 / WM37) (Yeast).